The chain runs to 85 residues: SKP1-like protein 6 (85 aa).

The tract at residues 65-85 (MMAANYLNIQSLLDLTFSNCR) is interaction with the F-box domain of F-box proteins.

This sequence belongs to the SKP1 family. Part of a SCF (SKP1-cullin-F-box) protein ligase complex.

The protein resides in the nucleus. It participates in protein modification; protein ubiquitination. In terms of biological role, involved in ubiquitination and subsequent proteasomal degradation of target proteins. Together with CUL1, RBX1 and a F-box protein, it forms a SCF E3 ubiquitin ligase complex. The functional specificity of this complex depends on the type of F-box protein. In the SCF complex, it serves as an adapter that links the F-box protein to CUL1. This is SKP1-like protein 6 (ASK6) from Arabidopsis thaliana (Mouse-ear cress).